We begin with the raw amino-acid sequence, 472 residues long: GTPase HflX (472 aa).

A disordered region spans residues 1–21 (MDTIDTPGEQGSQSFGNSLGA). The region spanning 230–396 (PTFALIGYTN…LMTEIIQEKS (167 aa)) is the Hflx-type G domain. GTP is bound by residues 236–243 (GYTNSGKS), 261–265 (FATLD), 283–286 (DTVG), 349–352 (NKVD), and 374–376 (SAK). Ser243 and Thr263 together coordinate Mg(2+).

It belongs to the TRAFAC class OBG-HflX-like GTPase superfamily. HflX GTPase family. As to quaternary structure, monomer. Associates with the 50S ribosomal subunit. Mg(2+) is required as a cofactor.

It localises to the cytoplasm. Functionally, GTPase that associates with the 50S ribosomal subunit and may have a role during protein synthesis or ribosome biogenesis. Specific for GTP. The chain is GTPase HflX from Chlamydia pneumoniae (Chlamydophila pneumoniae).